The primary structure comprises 123 residues: Large ribosomal subunit protein bL19 (123 aa).

The protein belongs to the bacterial ribosomal protein bL19 family.

In terms of biological role, this protein is located at the 30S-50S ribosomal subunit interface and may play a role in the structure and function of the aminoacyl-tRNA binding site. This Bdellovibrio bacteriovorus (strain ATCC 15356 / DSM 50701 / NCIMB 9529 / HD100) protein is Large ribosomal subunit protein bL19.